We begin with the raw amino-acid sequence, 140 residues long: Calcitonin (140 aa).

Residues methionine 1–alanine 25 form the signal peptide. Residues alanine 26–alanine 81 constitute a propeptide that is removed on maturation. Cysteine 84 and cysteine 90 form a disulfide bridge. The residue at position 115 (proline 115) is a Proline amide. A propeptide spanning residues valine 120 to tyrosine 140 is cleaved from the precursor.

It belongs to the calcitonin family.

It localises to the secreted. In terms of biological role, calcitonin is a peptide hormone that causes a rapid but short-lived drop in the level of calcium and phosphate in blood by promoting the incorporation of those ions in the bones. Calcitonin function is mediated by the calcitonin receptor/CALCR and the CALCR-RAMP2 (AMYR2) receptor complex. In Equus caballus (Horse), this protein is Calcitonin (CALCA).